We begin with the raw amino-acid sequence, 148 residues long: 15 kDa excretory/secretory protein (148 aa).

Residues 1-19 form the signal peptide; the sequence is MFFAFAVLLIALATREAYG.

This sequence to T.colubriformis 30 kDa antigenic glycoprotein.

Its subcellular location is the secreted. The sequence is that of 15 kDa excretory/secretory protein from Haemonchus contortus (Barber pole worm).